Here is a 210-residue protein sequence, read N- to C-terminus: Na(+)-translocating NADH-quinone reductase subunit D (210 aa).

6 helical membrane passes run 14-34 (PIISNNPIALQILGVCSALAV), 42-62 (LVMTIALTAVTALSNLFISMI), 72-92 (IIVQMTIIASLVIVVDQVLQA), 103-123 (VFVGLIITNCIVMGRAEAYAM), 131-151 (FMDGIGNGLGYGAILLSVGFV), and 178-198 (NGLLLLPPSAFFLIASLIWII).

It belongs to the NqrDE/RnfAE family. In terms of assembly, composed of six subunits; NqrA, NqrB, NqrC, NqrD, NqrE and NqrF.

The protein localises to the cell inner membrane. It catalyses the reaction a ubiquinone + n Na(+)(in) + NADH + H(+) = a ubiquinol + n Na(+)(out) + NAD(+). NQR complex catalyzes the reduction of ubiquinone-1 to ubiquinol by two successive reactions, coupled with the transport of Na(+) ions from the cytoplasm to the periplasm. NqrA to NqrE are probably involved in the second step, the conversion of ubisemiquinone to ubiquinol. The polypeptide is Na(+)-translocating NADH-quinone reductase subunit D (Shewanella loihica (strain ATCC BAA-1088 / PV-4)).